Here is a 322-residue protein sequence, read N- to C-terminus: 6-deoxy-6-sulfo-D-fructose transketolase subunit SqwH (322 aa).

This sequence belongs to the transketolase family. As to quaternary structure, forms a complex with SqwG. Requires thiamine diphosphate as cofactor.

It catalyses the reaction 6-deoxy-6-sulfo-D-fructose + D-glyceraldehyde 3-phosphate = 4-deoxy-4-sulfo-D-erythrose + D-xylulose 5-phosphate. It carries out the reaction 4-deoxy-4-sulfo-D-erythrulose + D-glyceraldehyde 3-phosphate = sulfoacetaldehyde + D-xylulose 5-phosphate. Its function is as follows. Part of the sulfo-TK pathway, a D-sulfoquinovose degradation pathway that produces 2-hydroxyethane-1-sulfonate (isethionate). Catalyzes two steps of the pathway: the formation of 4-deoxy-4-sulfoerythrose (SE) and xylulose 5-phosphate from 6-deoxy-6-sulfo-D-fructose (SF) and glyceraldehyde 3-phosphate, and the formation of sulfoacetaldehyde (SA) and xylulose 5-phosphate from 4-deoxy-4-sulfo-D-erythrulose (SEu) and glyceraldehyde 3-phosphate. This is 6-deoxy-6-sulfo-D-fructose transketolase subunit SqwH from Clostridium sp. (strain MSTE9).